The sequence spans 510 residues: Major facilitator superfamily domain-containing protein 4A (510 aa).

12 consecutive transmembrane segments (helical) span residues L19–L39, I53–V73, L82–C102, V107–N127, A139–I159, Y218–L238, F303–A323, G345–V365, V380–F400, V401–T421, V434–F454, and F462–F482.

Belongs to the major facilitator superfamily.

Its subcellular location is the membrane. This Mus musculus (Mouse) protein is Major facilitator superfamily domain-containing protein 4A.